Here is a 449-residue protein sequence, read N- to C-terminus: Aspartyl protease AED3 (449 aa).

The signal sequence occupies residues 1–23 (MASSSLHFFFFLTLLLPFTFTTA). The Peptidase A1 domain occupies 104–444 (YVVRAKLGTP…DVPNSRIGIA (341 aa)). Asp-122 is a catalytic residue. Cys-132 and Cys-138 are oxidised to a cystine. Residues Asn-140, Asn-148, Asn-184, Asn-211, and Asn-297 are each glycosylated (N-linked (GlcNAc...) asparagine). The active site involves Asp-328. Asn-353 is a glycosylation site (N-linked (GlcNAc...) asparagine). Cysteines 366 and 405 form a disulfide.

It belongs to the peptidase A1 family.

Its subcellular location is the secreted. It is found in the extracellular space. The protein localises to the apoplast. The chain is Aspartyl protease AED3 from Arabidopsis thaliana (Mouse-ear cress).